The following is a 137-amino-acid chain: Glutaredoxin-C9 (137 aa).

Residues 32-136 (GERVRMVVEE…PILKEVGALW (105 aa)) enclose the Glutaredoxin domain. A disulfide bridge connects residues Cys52 and Cys55. The short motif at 134-137 (ALWL) is the Responsive for interaction with TGA factors element.

This sequence belongs to the glutaredoxin family. CC-type subfamily. In terms of assembly, interacts with TGA2 and TGA6.

The protein resides in the cytoplasm. The protein localises to the nucleus. Functionally, has a glutathione-disulfide oxidoreductase activity in the presence of NADPH and glutathione reductase. Reduces low molecular weight disulfides and proteins. This is Glutaredoxin-C9 (GRXC9) from Arabidopsis thaliana (Mouse-ear cress).